Reading from the N-terminus, the 228-residue chain is Expansin-B13 (228 aa).

Residues 1 to 22 form the signal peptide; that stretch reads MASSSLLLASVVVAAMVSAVSC. Asparagine 32 carries N-linked (GlcNAc...) asparagine glycosylation. The 112-residue stretch at 61 to 172 folds into the Expansin-like EG45 domain; it reads SGACGYKDVD…KEKGSEEWKA (112 aa). Intrachain disulfides connect cysteine 64/cysteine 92 and cysteine 100/cysteine 106. Positions 142 to 223 constitute an Expansin-like CBD domain; it reads GKDEELLKYV…GWKADSVYKS (82 aa).

The protein belongs to the expansin family. Expansin B subfamily.

Its subcellular location is the secreted. It is found in the cell wall. It localises to the membrane. Functionally, may cause loosening and extension of plant cell walls by disrupting non-covalent bonding between cellulose microfibrils and matrix glucans. No enzymatic activity has been found. May be required for rapid internodal elongation in deepwater rice during submergence. This Oryza sativa subsp. japonica (Rice) protein is Expansin-B13 (EXPB13).